A 268-amino-acid chain; its full sequence is Casein kinase II subunit beta (268 aa).

Residues Leu222 to Lys268 are disordered. The span at Asn224 to Lys268 shows a compositional bias: low complexity.

This sequence belongs to the casein kinase 2 subunit beta family. Casein kinase II/CK2 is a tetramer composed of two alpha subunit and two beta subunits.

Regulatory subunit of casein kinase II/CK2. As part of the kinase complex regulates the basal catalytic activity of the alpha subunit a constitutively active serine/threonine-protein kinase that phosphorylates a large number of substrates containing acidic residues C-terminal to the phosphorylated serine or threonine. This is Casein kinase II subunit beta (csnk2b) from Dictyostelium discoideum (Social amoeba).